A 521-amino-acid polypeptide reads, in one-letter code: uncharacterized protein (521 aa).

A coiled-coil region spans residues 14 to 41; it reads QFQQMQHQMQQQQQQQMQQQQQQQQQQQ. 3 stretches are compositionally biased toward low complexity: residues 238-266, 275-353, and 423-482; these read LSGS…TSSS, SSTS…NNNN, and PRLS…PNNP. Disordered regions lie at residues 238-357 and 413-491; these read LSGS…ISGF and TAVA…SNNG.

This is an uncharacterized protein from Dictyostelium discoideum (Social amoeba).